The sequence spans 257 residues: Imidazole glycerol phosphate synthase subunit HisF (257 aa).

Residues aspartate 12 and aspartate 131 contribute to the active site.

This sequence belongs to the HisA/HisF family. Heterodimer of HisH and HisF.

It is found in the cytoplasm. The catalysed reaction is 5-[(5-phospho-1-deoxy-D-ribulos-1-ylimino)methylamino]-1-(5-phospho-beta-D-ribosyl)imidazole-4-carboxamide + L-glutamine = D-erythro-1-(imidazol-4-yl)glycerol 3-phosphate + 5-amino-1-(5-phospho-beta-D-ribosyl)imidazole-4-carboxamide + L-glutamate + H(+). Its pathway is amino-acid biosynthesis; L-histidine biosynthesis; L-histidine from 5-phospho-alpha-D-ribose 1-diphosphate: step 5/9. In terms of biological role, IGPS catalyzes the conversion of PRFAR and glutamine to IGP, AICAR and glutamate. The HisF subunit catalyzes the cyclization activity that produces IGP and AICAR from PRFAR using the ammonia provided by the HisH subunit. This is Imidazole glycerol phosphate synthase subunit HisF from Saccharophagus degradans (strain 2-40 / ATCC 43961 / DSM 17024).